The following is a 189-amino-acid chain: Prostaglandin-H2 D-isomerase (189 aa).

Residues 1 to 24 form the signal peptide; that stretch reads MATPSSLWLGLALLGTLGVLQTPA. Pyrrolidone carboxylic acid is present on Gln25. N-linked (GlcNAc...) asparagine glycosylation occurs at Asn49. Cys63 acts as the Nucleophile in catalysis. An N-linked (GlcNAc...) asparagine glycan is attached at Asn76. Cys87 and Cys184 form a disulfide bridge.

It belongs to the calycin superfamily. Lipocalin family. Monomer. Abundant in the brain and CNS, where it is expressed in tissues of the blood-brain barrier and secreted into the cerebro-spinal fluid.

It is found in the rough endoplasmic reticulum. It localises to the nucleus membrane. The protein localises to the golgi apparatus. Its subcellular location is the cytoplasm. The protein resides in the perinuclear region. It is found in the secreted. It carries out the reaction prostaglandin H2 = prostaglandin D2. Its function is as follows. Catalyzes the conversion of PGH2 to PGD2, a prostaglandin involved in smooth muscle contraction/relaxation and a potent inhibitor of platelet aggregation. Involved in a variety of CNS functions, such as sedation, NREM sleep and PGE2-induced allodynia, and may have an anti-apoptotic role in oligodendrocytes. Binds small non-substrate lipophilic molecules, including biliverdin, bilirubin, retinal, retinoic acid and thyroid hormone, and may act as a scavenger for harmful hydrophobic molecules and as a secretory retinoid and thyroid hormone transporter. Possibly involved in development and maintenance of the blood-brain, blood-retina, blood-aqueous humor and blood-testis barrier. It is likely to play important roles in both maturation and maintenance of the central nervous system and male reproductive system. Involved in PLA2G3-dependent maturation of mast cells. PLA2G3 is secreted by immature mast cells and acts on nearby fibroblasts upstream to PTDGS to synthesize PGD2, which in turn promotes mast cell maturation and degranulation via PTGDR. The sequence is that of Prostaglandin-H2 D-isomerase (PTGDS) from Sus scrofa (Pig).